The following is a 442-amino-acid chain: Protein translocase subunit SecF (442 aa).

Residues 1-39 are disordered; the sequence is MASKAKTGRDDEATSAVELTEATESAVARTDGDSTTDTA. Helical transmembrane passes span 67–87, 187–207, 218–238, 243–263, 301–321, and 331–351; these read WFGVSGAIVAVAIASIVFRGF, ITKKAVIALVVFLVLVALYIT, AITAMLFDLTVTAGVYSLVGF, ATVIGLLTILGFSLYDTVIVF, LIGVLPVLALMVVAVWLLGVG, and LIGIIIGTYSSIFFATPLLVT. Positions 366–442 are disordered; it reads VLKRRNSGSP…PTGKRNAGRR (77 aa). Residues 402 to 432 show a composition bias toward low complexity; the sequence is QASSQSAPRAAQGSSKPAPGARPVRPVGTRR. Residues 433–442 are compositionally biased toward basic residues; the sequence is PTGKRNAGRR.

This sequence belongs to the SecD/SecF family. SecF subfamily. As to quaternary structure, forms a complex with SecD. Part of the essential Sec protein translocation apparatus which comprises SecA, SecYEG and auxiliary proteins SecDF. Other proteins may also be involved.

The protein resides in the cell membrane. Its function is as follows. Part of the Sec protein translocase complex. Interacts with the SecYEG preprotein conducting channel. SecDF uses the proton motive force (PMF) to complete protein translocation after the ATP-dependent function of SecA. This Mycobacterium tuberculosis (strain ATCC 25618 / H37Rv) protein is Protein translocase subunit SecF.